We begin with the raw amino-acid sequence, 509 residues long: Erythropoietin receptor (509 aa).

Positions 1 to 24 (MYHFGATLWPGVGSLCLLLAGATW) are cleaved as a signal peptide. Residues 25–251 (APSPNSPDAK…SLLTASDLDP (227 aa)) are Extracellular-facing. 2 disulfide bridges follow: Cys-52–Cys-62 and Cys-91–Cys-107. The 101-residue stretch at 148 to 248 (PPAGLLARRA…EPASLLTASD (101 aa)) folds into the Fibronectin type-III domain. An N-linked (GlcNAc...) asparagine glycan is attached at Asn-184. The WSXWS motif motif lies at 234–238 (WSAWS). Residues 252–274 (LILTLSLILVLILLLLAVLALLS) traverse the membrane as a helical segment. Topologically, residues 275–509 (HRRTLKQKIW…PSPPNYVTCS (235 aa)) are cytoplasmic. Lys-282 participates in a covalent cross-link: Glycyl lysine isopeptide (Lys-Gly) (interchain with G-Cter in ubiquitin). The Box 1 motif motif lies at 283-291 (IWPGIPSPE). A phosphotyrosine; by JAK2 mark is found at Tyr-369 and Tyr-427. The short motif at 453–458 (LKYLYL) is the ITIM motif element. A Glycyl lysine isopeptide (Lys-Gly) (interchain with G-Cter in ubiquitin) cross-link involves residue Lys-454. 6 positions are modified to phosphotyrosine; by JAK2: Tyr-455, Tyr-457, Tyr-469, Tyr-486, Tyr-490, and Tyr-505. The interval 467-509 (TDYSSGGSQETQGGSSSGPYSNPYENSLVPAPEPSPPNYVTCS) is disordered. A compositionally biased stretch (low complexity) spans 470–493 (SSGGSQETQGGSSSGPYSNPYENS).

The protein belongs to the type I cytokine receptor family. Type 1 subfamily. In terms of assembly, forms homodimers on EPO stimulation. The tyrosine-phosphorylated form interacts with several SH2 domain-containing proteins including LYN, the adapter protein SH2B2, PTPN6, PTPN11, JAK2, PI3 kinases, STAT5A/B, SOCS3, CRKL. Interacts with INPP5D/SHIP1. SH2B2 binding inhibits the JAK-STAT signaling. Interacts with RHEX; this interaction occurs in a erythropoietin (EPO)-dependent manner. Interacts with ATXN2L. In terms of processing, on EPO stimulation, phosphorylated on C-terminal tyrosine residues by JAK2. The phosphotyrosine motifs are also recruitment sites for several SH2-containing proteins and adapter proteins which mediate cell proliferation. Phosphorylation on Tyr-455 is required for PTPN6 interaction, Tyr-427 for PTPN11. Tyr-427 is also required for SOCS3 binding, but Tyr-455/Tyr-457 motif is the preferred binding site. Ubiquitinated by the ECS(SOCS2) complex following ligand-binding and phosphorylation by JAK2, leading to its degradation by the proteasome. Regulation by the ECS(SOCS2) complex acts as a negative feedback loop of erythropoietin-mediated signaling pathway. Ubiquitination at Lys-282 mediates receptor internalization, whereas ubiquitination at Lys-454 promotes trafficking of activated receptors to the lysosomes for degradation. Ubiquitinated by NOSIP; appears to be either multi-monoubiquitinated or polyubiquitinated. Ubiquitination mediates proliferation and survival of EPO-dependent cells.

It localises to the cell membrane. Receptor for erythropoietin, which mediates erythropoietin-induced erythroblast proliferation and differentiation. Upon EPO stimulation, EPOR dimerizes triggering the JAK2/STAT5 signaling cascade. In some cell types, can also activate STAT1 and STAT3. May also activate the LYN tyrosine kinase. Functionally, isoform EPOR-T acts as a dominant-negative receptor of EPOR-mediated signaling. The chain is Erythropoietin receptor (EPOR) from Sus scrofa (Pig).